We begin with the raw amino-acid sequence, 27 residues long: Cupiennin-4a (27 aa).

A Glutamic acid 1-amide modification is found at glutamate 27.

Expressed by the venom gland.

Its subcellular location is the secreted. This chain is Cupiennin-4a, found in Cupiennius salei (American wandering spider).